We begin with the raw amino-acid sequence, 336 residues long: Probable G-protein coupled receptor 82 (336 aa).

At 1–11 the chain is on the extracellular side; it reads MNNNTTCIQPS. Residues asparagine 3 and asparagine 4 are each glycosylated (N-linked (GlcNAc...) asparagine). A helical membrane pass occupies residues 12–32; that stretch reads MISSMALPIIYILLCIVGVFG. Over 33 to 55 the chain is Cytoplasmic; the sequence is NTLSQWIFLTKIGKKTSTHIYLS. Residues 56-76 form a helical membrane-spanning segment; sequence HLVTANLLVCSAMPFMSIYFL. Residues 77 to 92 lie on the Extracellular side of the membrane; that stretch reads KGFQWEYQSAQCRVVN. The helical transmembrane segment at 93-115 threads the bilayer; the sequence is FLGTLSMHASMFVSLLILSWIAI. At 116–156 the chain is on the cytoplasmic side; sequence SRYATLMQKDSSQETTSCYEKIFYGHLLKKFRQPNFARKLC. The chain crosses the membrane as a helical span at residues 157-177; the sequence is IYIWGVVLGIIIPVTVYYSVI. The Extracellular segment spans residues 178 to 197; sequence EATEGEESLCYNRQMELGAM. The helical transmembrane segment at 198 to 218 threads the bilayer; that stretch reads ISQIAGLIGTTFIGFSFLVVL. The Cytoplasmic portion of the chain corresponds to 219 to 251; that stretch reads TSYYSFVSHLRKIRTCTSIMEKDLTYSSVKRHL. A helical membrane pass occupies residues 252–272; the sequence is LVIQILLIVCFLPYSIFKPIF. At 273–336 the chain is on the extracellular side; the sequence is YVLHQRDNCQ…SNSAHMQSYG (64 aa).

This sequence belongs to the G-protein coupled receptor 1 family.

It is found in the cell membrane. Its function is as follows. Orphan receptor. This chain is Probable G-protein coupled receptor 82 (GPR82), found in Homo sapiens (Human).